The chain runs to 611 residues: Calmegin (611 aa).

An N-terminal signal peptide occupies residues 1 to 19 (MRFQGVGLCLGLLFITVNA). Topologically, residues 20-471 (DFMDDGVEVE…LVIAAEERPW (452 aa)) are lumenal. Lys128 is subject to N6-acetyllysine. A disulfide bond links Cys151 and Cys185. A disordered region spans residues 254–335 (LDDVVPPINP…KAEKPEDWSD (82 aa)). A compositionally biased stretch (basic and acidic residues) spans 265-284 (REIDDPSDKKPEEWDDRAKI). A run of 8 repeats spans residues 267–280 (IDDP…EWDD), 284–297 (IPDP…DWDE), 303–316 (IEDS…GWLD), 322–335 (IPNP…DWSD), 339–352 (GEWE…PACQ), 356–369 (GEWK…PKYK), 370–383 (GIWR…PNYQ), and 384–397 (GLWS…PDYF). The interaction with PPIB stretch occupies residues 317–350 (DEPKFIPNPKAEKPEDWSDDMDGEWEAPHIPNPA). Cys351 and Cys355 are joined by a disulfide. Residues 472-492 (LWLMYLVMAGLPVALVASFCW) form a helical membrane-spanning segment. Residues 493–611 (PRKVKKKYED…SLRKRRVRKD (119 aa)) are Cytoplasmic-facing. Positions 517–611 (AALEQEAEEE…SLRKRRVRKD (95 aa)) are disordered. Residues 526–584 (EKAPEKPEDVQEEKKPGEAEVVTVEKEVIGEPEEKSKEDRETLEGQEEVSKLSKSGSED) show a composition bias toward basic and acidic residues. A phosphoserine mark is found at Ser561, Ser578, Ser580, Ser582, Ser592, Ser595, and Ser602. Residues 602-611 (SLRKRRVRKD) show a composition bias toward basic residues.

This sequence belongs to the calreticulin family. Interacts with PDILT and PPIB. Interacts with ADAM2. Interacts with ADAM1A, ADAM1B and ADAM3; these are protein-coding genes in mouse but may be pseudogenes in other organisms. In terms of tissue distribution, detected in testis (at protein level). Detected in testis.

It localises to the endoplasmic reticulum membrane. Functions during spermatogenesis as a chaperone for a range of client proteins that are important for sperm adhesion onto the egg zona pellucida and for subsequent penetration of the zona pellucida. Required for normal sperm migration from the uterus into the oviduct. Required for normal male fertility. Binds calcium ions. The chain is Calmegin (Clgn) from Mus musculus (Mouse).